A 1191-amino-acid chain; its full sequence is WASH complex subunit homolog 5 (1191 aa).

It belongs to the strumpellin family. As to quaternary structure, component of the WASH complex.

It localises to the early endosome. Functionally, acts at least in part as component of the WASH complex which may regulate wash nucleation-promoting factor (NPF) activity and is required for its membrane targeting during endosomal sorting. During embryogenesis, not involved in the wash-dependent developmental migration of hemocytes anteriorly from the tail. The chain is WASH complex subunit homolog 5 from Drosophila melanogaster (Fruit fly).